The chain runs to 281 residues: Pantothenate synthetase (281 aa).

Residue 30 to 37 (MGNLHLGH) coordinates ATP. The active-site Proton donor is H37. Residue Q61 coordinates (R)-pantoate. Residue Q61 participates in beta-alanine binding. An ATP-binding site is contributed by 149–152 (GRKD). Q155 provides a ligand contact to (R)-pantoate. ATP is bound by residues I178 and 186-189 (MSSR).

Belongs to the pantothenate synthetase family. As to quaternary structure, homodimer.

It localises to the cytoplasm. It catalyses the reaction (R)-pantoate + beta-alanine + ATP = (R)-pantothenate + AMP + diphosphate + H(+). Its pathway is cofactor biosynthesis; (R)-pantothenate biosynthesis; (R)-pantothenate from (R)-pantoate and beta-alanine: step 1/1. Functionally, catalyzes the condensation of pantoate with beta-alanine in an ATP-dependent reaction via a pantoyl-adenylate intermediate. The polypeptide is Pantothenate synthetase (Shewanella woodyi (strain ATCC 51908 / MS32)).